Reading from the N-terminus, the 363-residue chain is Outer membrane porin F (363 aa).

A signal peptide spans 1–22; it reads MMKRKILAAVIPALLAAATANA.

Belongs to the Gram-negative porin family. As to quaternary structure, homotrimer. Forms mixed heterotrimers with OmpC and with PhoE; other mixed heterotrimers with other porins are also probable.

The protein localises to the cell outer membrane. Its function is as follows. Forms pores that allow passive diffusion of small molecules across the outer membrane. The chain is Outer membrane porin F from Salmonella typhimurium (strain SL1344).